Reading from the N-terminus, the 500-residue chain is Aspartyl/glutamyl-tRNA(Asn/Gln) amidotransferase subunit B (500 aa).

It belongs to the GatB/GatE family. GatB subfamily. As to quaternary structure, heterotrimer of A, B and C subunits.

It catalyses the reaction L-glutamyl-tRNA(Gln) + L-glutamine + ATP + H2O = L-glutaminyl-tRNA(Gln) + L-glutamate + ADP + phosphate + H(+). The enzyme catalyses L-aspartyl-tRNA(Asn) + L-glutamine + ATP + H2O = L-asparaginyl-tRNA(Asn) + L-glutamate + ADP + phosphate + 2 H(+). Functionally, allows the formation of correctly charged Asn-tRNA(Asn) or Gln-tRNA(Gln) through the transamidation of misacylated Asp-tRNA(Asn) or Glu-tRNA(Gln) in organisms which lack either or both of asparaginyl-tRNA or glutaminyl-tRNA synthetases. The reaction takes place in the presence of glutamine and ATP through an activated phospho-Asp-tRNA(Asn) or phospho-Glu-tRNA(Gln). The sequence is that of Aspartyl/glutamyl-tRNA(Asn/Gln) amidotransferase subunit B from Thermosynechococcus vestitus (strain NIES-2133 / IAM M-273 / BP-1).